The chain runs to 323 residues: Quinolinate synthase (323 aa).

Iminosuccinate is bound by residues His38 and Ser55. Cys100 serves as a coordination point for [4Fe-4S] cluster. Iminosuccinate is bound by residues 126-128 (YIN) and Ser143. Residue Cys186 coordinates [4Fe-4S] cluster. Residues 212–214 (HPE) and Thr229 each bind iminosuccinate. Residue Cys279 participates in [4Fe-4S] cluster binding.

It belongs to the quinolinate synthase family. Type 2 subfamily. Requires [4Fe-4S] cluster as cofactor.

Its subcellular location is the cytoplasm. The enzyme catalyses iminosuccinate + dihydroxyacetone phosphate = quinolinate + phosphate + 2 H2O + H(+). The protein operates within cofactor biosynthesis; NAD(+) biosynthesis; quinolinate from iminoaspartate: step 1/1. In terms of biological role, catalyzes the condensation of iminoaspartate with dihydroxyacetone phosphate to form quinolinate. In Gloeothece citriformis (strain PCC 7424) (Cyanothece sp. (strain PCC 7424)), this protein is Quinolinate synthase.